Consider the following 163-residue polypeptide: ATP synthase subunit b (163 aa).

The chain crosses the membrane as a helical span at residues 1–21; it reads MISFNLTSIVNLVGFLAFMFL.

This sequence belongs to the ATPase B chain family. As to quaternary structure, F-type ATPases have 2 components, F(1) - the catalytic core - and F(0) - the membrane proton channel. F(1) has five subunits: alpha(3), beta(3), gamma(1), delta(1), epsilon(1). F(0) has three main subunits: a(1), b(2) and c(10-14). The alpha and beta chains form an alternating ring which encloses part of the gamma chain. F(1) is attached to F(0) by a central stalk formed by the gamma and epsilon chains, while a peripheral stalk is formed by the delta and b chains.

Its subcellular location is the cell inner membrane. F(1)F(0) ATP synthase produces ATP from ADP in the presence of a proton or sodium gradient. F-type ATPases consist of two structural domains, F(1) containing the extramembraneous catalytic core and F(0) containing the membrane proton channel, linked together by a central stalk and a peripheral stalk. During catalysis, ATP synthesis in the catalytic domain of F(1) is coupled via a rotary mechanism of the central stalk subunits to proton translocation. Functionally, component of the F(0) channel, it forms part of the peripheral stalk, linking F(1) to F(0). The chain is ATP synthase subunit b from Petrotoga mobilis (strain DSM 10674 / SJ95).